The sequence spans 280 residues: 4-deoxy-L-threo-5-hexosulose-uronate ketol-isomerase 1 (280 aa).

Positions 198, 200, 205, and 247 each coordinate Zn(2+).

The protein belongs to the KduI family. It depends on Zn(2+) as a cofactor.

The catalysed reaction is 5-dehydro-4-deoxy-D-glucuronate = 3-deoxy-D-glycero-2,5-hexodiulosonate. The protein operates within glycan metabolism; pectin degradation; 2-dehydro-3-deoxy-D-gluconate from pectin: step 4/5. Its function is as follows. Catalyzes the isomerization of 5-dehydro-4-deoxy-D-glucuronate to 3-deoxy-D-glycero-2,5-hexodiulosonate. The protein is 4-deoxy-L-threo-5-hexosulose-uronate ketol-isomerase 1 (kduI1) of Bacteroides thetaiotaomicron (strain ATCC 29148 / DSM 2079 / JCM 5827 / CCUG 10774 / NCTC 10582 / VPI-5482 / E50).